The sequence spans 604 residues: Putative sodium-dependent multivitamin transporter (604 aa).

Helical transmembrane passes span 4–24 (LGAW…AIGI), 48–68 (VAPV…ILGV), 78–98 (MFVV…YLII), 134–154 (VLYM…VTGL), 160–180 (IVIV…KAVL), and 188–208 (LLMF…AGSL). Residues N222 and N225 are each glycosylated (N-linked (GlcNAc...) asparagine). A run of 7 helical transmembrane segments spans residues 234–254 (HTWF…YGVN), 273–293 (ALWW…FSGL), 331–351 (LAGL…SSII), 389–409 (LFFG…GGLL), 413–433 (LSIF…GMYV), 440–460 (GAIG…FGQP), and 511–531 (ALGF…FALL).

This sequence belongs to the sodium:solute symporter (SSF) (TC 2.A.21) family.

The protein resides in the cell membrane. The polypeptide is Putative sodium-dependent multivitamin transporter (Drosophila melanogaster (Fruit fly)).